We begin with the raw amino-acid sequence, 432 residues long: Adenylosuccinate synthetase (432 aa).

GTP is bound by residues 12 to 18 and 40 to 42; these read GDEGKGK and GHT. The active-site Proton acceptor is Asp13. 2 residues coordinate Mg(2+): Asp13 and Gly40. Residues 13-16, 38-41, Thr129, Arg143, Gln224, Thr239, and Arg303 contribute to the IMP site; these read DEGK and NAGH. The active-site Proton donor is His41. Position 299-305 (299-305) interacts with substrate; the sequence is VTTGRRR. Residues Arg305, 331-333, and 413-415 contribute to the GTP site; these read KLD and GVG.

The protein belongs to the adenylosuccinate synthetase family. As to quaternary structure, homodimer. Requires Mg(2+) as cofactor.

It is found in the cytoplasm. The enzyme catalyses IMP + L-aspartate + GTP = N(6)-(1,2-dicarboxyethyl)-AMP + GDP + phosphate + 2 H(+). Its pathway is purine metabolism; AMP biosynthesis via de novo pathway; AMP from IMP: step 1/2. Its function is as follows. Plays an important role in the de novo pathway of purine nucleotide biosynthesis. Catalyzes the first committed step in the biosynthesis of AMP from IMP. In Mycobacterium tuberculosis (strain CDC 1551 / Oshkosh), this protein is Adenylosuccinate synthetase.